We begin with the raw amino-acid sequence, 345 residues long: Splicing factor YJU2 (345 aa).

The Zn(2+) site is built by cysteine 43, cysteine 46, cysteine 80, and cysteine 83. A disordered region spans residues 205 to 345 (KRLRDSDSEE…YSDSDDSSSD (141 aa)). Basic and acidic residues predominate over residues 217–232 (ENAKERSKKHIADKPT). Composition is skewed to low complexity over residues 308 to 317 (SSITSSSASS) and 327 to 337 (GSSLGLLGAYS).

Belongs to the CWC16 family. YJU2 subfamily. As to quaternary structure, component of the spliceosome. Present in the activated B complex, the catalytically activated B* complex which catalyzes the branching, the catalytic step 1 C complex catalyzing the exon ligation, and the postcatalytic P complex containing the ligated exons (mRNA) and the excised lariat intron.

The protein resides in the nucleus. Part of the spliceosome which catalyzes two sequential transesterification reactions, first the excision of the non-coding intron from pre-mRNA and then the ligation of the coding exons to form the mature mRNA. Plays a role in stabilizing the structure of the spliceosome catalytic core and docking of the branch helix into the active site, producing 5'-exon and lariat intron-3'-intermediates. May protect cells from TP53-dependent apoptosis upon dsDNA break damage through association with PRP19-CD5L complex. The sequence is that of Splicing factor YJU2 from Danio rerio (Zebrafish).